Reading from the N-terminus, the 386-residue chain is Bifunctional desaturase/conjugase FADX (386 aa).

The disordered stretch occupies residues 1–28 (MGAGGRMSVAPNNSKCEKKESRSVKRVP). A run of 2 helical transmembrane segments spans residues 65 to 85 (LSFIFYSIATTYFHLLPSPIT) and 87 to 107 (IAWPVYWAFQGCILTSVWVLG). The short motif at 108–112 (HECGH) is the Histidine box-1 element. The short motif at 144–148 (HRRHH) is the Histidine box-2 element. The next 3 helical transmembrane spans lie at 182 to 202 (ALTLVATLFIGWPLYLAFNVS), 228 to 248 (IYISDAMIFVAAYVLYKIAMA), and 250 to 270 (GLAWLVCIYGVPLLIVNALVV). A Histidine box-3 motif is present at residues 318-322 (HVIHH).

This sequence belongs to the fatty acid desaturase type 1 family. In terms of tissue distribution, expressed exclusively in developing seeds.

It localises to the endoplasmic reticulum membrane. The catalysed reaction is a (9Z,12Z)-octadecadienoyl-containing glycerolipid + 2 Fe(II)-[cytochrome b5] + O2 + 2 H(+) = a (9Z,11E,13E)-octadecatrienoyl-containing glycerolipid + 2 Fe(III)-[cytochrome b5] + 2 H2O. The enzyme catalyses (9Z,12Z,15Z)-octadecatrienoyl-containing glycerolipid + 2 Fe(II)-[cytochrome b5] + O2 + 2 H(+) = a (9Z,11E,13E,15Z)-octadecatetraenoyl-containing glycerolipid + 2 Fe(III)-[cytochrome b5] + 2 H2O. It carries out the reaction a (9Z)-octadecenoyl-containing glycerolipid + 2 Fe(II)-[cytochrome b5] + O2 + 2 H(+) = a (9Z,12E)-octadecadienoyl-containing glycerolipid + 2 Fe(III)-[cytochrome b5] + 2 H2O. It catalyses the reaction a (9Z)-hexadecenoyl-containing glycerolipid + 2 Fe(II)-[cytochrome b5] + O2 + 2 H(+) = a (9Z,12E)-hexadecadienoyl-containing glycerolipid + 2 Fe(III)-[cytochrome b5] + 2 H2O. It functions in the pathway lipid metabolism; polyunsaturated fatty acid biosynthesis. Functionally, converts linoleic acid to alpha-eleostearic acid (18:3(9Z,11E,13E)) and alpha-linolenic acid to alpha-parinaric acid (18:4(9Z,11E,13E,15Z)). Converts a single cis double bond at carbon 12 to two conjugated trans bonds at positions 11 and 13. Can also act as a 12(E) desaturase when acting on the monounsaturated fatty acids oleate and palmitoleate, stereoselectively introducing a trans double bond. This chain is Bifunctional desaturase/conjugase FADX, found in Vernicia fordii (Tung).